We begin with the raw amino-acid sequence, 147 residues long: Large ribosomal subunit protein bL9 (147 aa).

It belongs to the bacterial ribosomal protein bL9 family.

Binds to the 23S rRNA. In Mycoplasma capricolum subsp. capricolum (strain California kid / ATCC 27343 / NCTC 10154), this protein is Large ribosomal subunit protein bL9.